The following is a 271-amino-acid chain: ATP synthase subunit a (271 aa).

A run of 5 helical transmembrane segments spans residues 31 to 51 (WDTI…GLYM), 89 to 109 (FVAP…WIGV), 124 to 144 (DINL…IVSL), 186 to 206 (IFSG…VLWL), and 216 to 236 (LGVG…YYAF). A disordered region spans residues 247-271 (DEHADGGDSSSRQASPTPLPAGQVR).

It belongs to the ATPase A chain family. As to quaternary structure, F-type ATPases have 2 components, CF(1) - the catalytic core - and CF(0) - the membrane proton channel. CF(1) has five subunits: alpha(3), beta(3), gamma(1), delta(1), epsilon(1). CF(0) has three main subunits: a(1), b(2) and c(9-12). The alpha and beta chains form an alternating ring which encloses part of the gamma chain. CF(1) is attached to CF(0) by a central stalk formed by the gamma and epsilon chains, while a peripheral stalk is formed by the delta and b chains.

It is found in the cell membrane. Its function is as follows. Key component of the proton channel; it plays a direct role in the translocation of protons across the membrane. The sequence is that of ATP synthase subunit a from Acidothermus cellulolyticus (strain ATCC 43068 / DSM 8971 / 11B).